A 568-amino-acid chain; its full sequence is PTS system lactose-specific EIICB component (568 aa).

In terms of domain architecture, PTS EIIC type-3 spans 7–409; it reads LIEKGKPFFE…VVDTIIYYPF (403 aa). 9 consecutive transmembrane segments (helical) span residues 30–50, 62–82, 103–123, 128–148, 183–203, 222–242, 283–303, 339–359, and 389–409; these read GFIA…IAYV, IETF…FFVG, INFL…AAEP, GFLT…AAFV, FTVS…TLGV, GYLG…VGIH, FIAT…FMWI, IFFV…KFFV, and VLSF…YYPF. The PTS EIIB type-3 domain occupies 466–568; the sequence is ETNVLVLCAG…ALAFVQQQFD (103 aa). Catalysis depends on cysteine 473, which acts as the Phosphocysteine intermediate; for EIIB activity. Phosphocysteine; by EIIA is present on cysteine 473.

It is found in the cell membrane. It catalyses the reaction lactose(out) + N(pros)-phospho-L-histidyl-[protein] = lactose 6-phosphate(in) + L-histidyl-[protein]. In terms of biological role, the phosphoenolpyruvate-dependent sugar phosphotransferase system (sugar PTS), a major carbohydrate active transport system, catalyzes the phosphorylation of incoming sugar substrates concomitantly with their translocation across the cell membrane. The enzyme II LacEF PTS system is involved in lactose transport. This chain is PTS system lactose-specific EIICB component, found in Lactococcus lactis subsp. lactis (Streptococcus lactis).